Reading from the N-terminus, the 400-residue chain is MKEKIVLAYSGGLDTSVAVKWLIDKGYDVVAVCLDVGEGKDLDVVYSKALDMGAVECHIIDATKEFSDDFVSYAIKGNLMYENSYPLVSALSRPLIAKKLVEIAEQTNSVGIAHGCTGKGNDQVRFEVAIKALNPNLKAFAPVREWGWSREEEIDYAIKHNIPVGINHDSPYSIDQNLWGRANECGILEDPYAAPPKDAYDLTAELEDTPDTPDEIILSFKNGVPVQLNHQDYDLDQLILTLNELAGKHGIGRIDHVENRLAGIKSREIYETPGAEVILKAHKALETLTLTKDVAHFKPVIEKQFAEQTYNGLWFSPLTDSLKLFIDSTQQYVEGDVRIKLFKGNAIVNGRKSLYTLYDEKLATYTKEDAFNQSAAVGFIDIYGLPTQVNAYLHGGYSNE.

8–16 is a binding site for ATP; it reads AYSGGLDTS. An L-citrulline-binding site is contributed by tyrosine 85. Glycine 115 serves as a coordination point for ATP. Threonine 117, asparagine 121, and aspartate 122 together coordinate L-aspartate. Asparagine 121 is a binding site for L-citrulline. L-citrulline-binding residues include arginine 125, serine 173, glutamate 258, and tyrosine 270.

The protein belongs to the argininosuccinate synthase family. Type 1 subfamily. As to quaternary structure, homotetramer.

The protein localises to the cytoplasm. It catalyses the reaction L-citrulline + L-aspartate + ATP = 2-(N(omega)-L-arginino)succinate + AMP + diphosphate + H(+). It functions in the pathway amino-acid biosynthesis; L-arginine biosynthesis; L-arginine from L-ornithine and carbamoyl phosphate: step 2/3. This chain is Argininosuccinate synthase, found in Staphylococcus haemolyticus (strain JCSC1435).